A 163-amino-acid chain; its full sequence is Phosphopantetheine adenylyltransferase (163 aa).

Ser-9 is a substrate binding site. ATP contacts are provided by residues 9–10 (SF) and His-17. Positions 41, 75, and 89 each coordinate substrate. ATP is bound by residues 90–92 (GIR), Glu-100, and 125–131 (HLYVRSD).

It belongs to the bacterial CoaD family. As to quaternary structure, homohexamer. The cofactor is Mg(2+).

Its subcellular location is the cytoplasm. It catalyses the reaction (R)-4'-phosphopantetheine + ATP + H(+) = 3'-dephospho-CoA + diphosphate. Its pathway is cofactor biosynthesis; coenzyme A biosynthesis; CoA from (R)-pantothenate: step 4/5. Functionally, reversibly transfers an adenylyl group from ATP to 4'-phosphopantetheine, yielding dephospho-CoA (dPCoA) and pyrophosphate. The chain is Phosphopantetheine adenylyltransferase from Borreliella burgdorferi (strain ZS7) (Borrelia burgdorferi).